The sequence spans 1231 residues: STE20-like serine/threonine-protein kinase (1231 aa).

At S14 the chain carries Phosphoserine. The region spanning 34–292 is the Protein kinase domain; sequence WETIGELGDG…TSQLLQHPFV (259 aa). ATP-binding positions include 40-48 and K63; that span reads LGDGAFGKV. The Proton acceptor role is filled by D155. T183 is modified (phosphothreonine). S189 carries the phosphoserine modification. The disordered stretch occupies residues 309 to 351; the sequence is AEVTEEVEDGKEEDDDEEIENSLPIPTNKRASSDLSIASSEED. Over residues 312–328 the composition is skewed to acidic residues; it reads TEEVEDGKEEDDDEEIE. 8 positions are modified to phosphoserine: S330, S340, S341, S344, S347, S348, S354, and S372. Residues 337 to 347 show a composition bias toward polar residues; it reads KRASSDLSIAS. The interval 405-478 is disordered; it reads PDRATELPES…KQPVLENKLV (74 aa). 2 stretches are compositionally biased toward basic and acidic residues: residues 407 to 428 and 446 to 478; these read RATE…RLPD and DHAV…NKLV. A Phosphoserine modification is found at S507. Over residues 516–531 the composition is skewed to basic and acidic residues; sequence THEKLRKDDTTQKDVI. A disordered region spans residues 516–757; that stretch reads THEKLRKDDT…TGSTADNSSI (242 aa). Phosphoserine is present on residues S536 and S554. A compositionally biased stretch (basic and acidic residues) spans 601–613; it reads TDQKLVENTHEKQ. Positions 615-624 are enriched in polar residues; it reads PISSETTLDT. Phosphoserine is present on residues S641 and S661. The segment covering 641 to 660 has biased composition (acidic residues); the sequence is STEEVEVEGAVSETDEEDVQ. Positions 683-692 are enriched in low complexity; that stretch reads EAPAQVEVQV. Residues 693–706 are compositionally biased toward pro residues; sequence PVPPQPSEPPPAPI. Position 775 is a phosphoserine (S775). T810 carries the post-translational modification Phosphothreonine. Residue S814 is modified to Phosphoserine. Residues 822–1065 adopt a coiled-coil conformation; sequence LRRQELRELR…LKNRQTQERA (244 aa). Residues 871 to 906 enclose the UVR domain; that stretch reads DQEIENLEKQQKQTIERLEQEHTNRLRDEAKRIKGE. Phosphothreonine is present on T1093. A coiled-coil region spans residues 1105–1179; it reads SAQEEKRQKN…ELKEWREKLR (75 aa).

Belongs to the protein kinase superfamily. STE Ser/Thr protein kinase family. STE20 subfamily. Post-translationally, proteolytically cleaved by caspase-3. Autophosphorylated. As to expression, ubiquitously expressed.

The protein resides in the cytoplasm. The enzyme catalyses L-seryl-[protein] + ATP = O-phospho-L-seryl-[protein] + ADP + H(+). The catalysed reaction is L-threonyl-[protein] + ATP = O-phospho-L-threonyl-[protein] + ADP + H(+). Its function is as follows. Mediates apoptosis and actin stress fiber dissolution. This is STE20-like serine/threonine-protein kinase (SLK) from Cavia porcellus (Guinea pig).